Consider the following 910-residue polypeptide: Protein translocase subunit SecA (910 aa).

ATP-binding positions include Gln-89, 107–111, and Asp-502; that span reads GEGKT. 4 residues coordinate Zn(2+): Cys-894, Cys-896, Cys-905, and His-906.

It belongs to the SecA family. Monomer and homodimer. Part of the essential Sec protein translocation apparatus which comprises SecA, SecYEG and auxiliary proteins SecDF-YajC and YidC. The cofactor is Zn(2+).

It is found in the cell inner membrane. The protein resides in the cytoplasm. The enzyme catalyses ATP + H2O + cellular proteinSide 1 = ADP + phosphate + cellular proteinSide 2.. Part of the Sec protein translocase complex. Interacts with the SecYEG preprotein conducting channel. Has a central role in coupling the hydrolysis of ATP to the transfer of proteins into and across the cell membrane, serving both as a receptor for the preprotein-SecB complex and as an ATP-driven molecular motor driving the stepwise translocation of polypeptide chains across the membrane. This Mesorhizobium japonicum (strain LMG 29417 / CECT 9101 / MAFF 303099) (Mesorhizobium loti (strain MAFF 303099)) protein is Protein translocase subunit SecA.